The primary structure comprises 217 residues: Probable septum site-determining protein MinC (217 aa).

Belongs to the MinC family. In terms of assembly, interacts with MinD and FtsZ.

In terms of biological role, cell division inhibitor that blocks the formation of polar Z ring septums. Rapidly oscillates between the poles of the cell to destabilize FtsZ filaments that have formed before they mature into polar Z rings. Prevents FtsZ polymerization. In Pelotomaculum thermopropionicum (strain DSM 13744 / JCM 10971 / SI), this protein is Probable septum site-determining protein MinC.